The following is a 621-amino-acid chain: Interferon-induced GTP-binding protein Mx1 (621 aa).

The 274-residue stretch at 31–304 (DLALPAIAVI…LVHHIEKSLP (274 aa)) folds into the Dynamin-type G domain. A G1 motif region spans residues 41-48 (GDQSSGKS). 41 to 48 (GDQSSGKS) contributes to the GTP binding site. Positions 66–68 (VTR) are G2 motif. Positions 142-145 (DLPG) are G3 motif. Residues 142 to 146 (DLPGI) and 211 to 214 (TKPD) contribute to the GTP site. Residues 211-214 (TKPD) form a G4 motif region. A G5 motif region spans residues 243–246 (KCRG). In terms of domain architecture, GED spans 535–621 (LQEMMLHLKS…MKARSYLVEF (87 aa)).

Belongs to the TRAFAC class dynamin-like GTPase superfamily. Dynamin/Fzo/YdjA family.

The protein localises to the cytoplasm. Does not inhibit strain RB-1 of the fish pathogen, infectious hematopoietic necrosis virus (IHNV). The protein is Interferon-induced GTP-binding protein Mx1 (mx1) of Oncorhynchus mykiss (Rainbow trout).